The sequence spans 203 residues: MPSKNGPLRIGIGGPVGSGKTALTDKLCKAMREKYSVAVVTNDIYTKEDAEALVRMQALPSERIVGVETGGCPHTAIREDASINLQAIADLNRRIPDLDVVFIESGGDNLAATFSPDLADLTIYVISVCQGEEIPRKGGPGITRSDLLVINKKDLAPYVGADLGVMERDAARMRAEKPFVFSDMKRGDGVERIVEFLTVHGGL.

A GTP-binding site is contributed by 14–21 (GPVGSGKT).

The protein belongs to the SIMIBI class G3E GTPase family. UreG subfamily. Homodimer. UreD, UreF and UreG form a complex that acts as a GTP-hydrolysis-dependent molecular chaperone, activating the urease apoprotein by helping to assemble the nickel containing metallocenter of UreC. The UreE protein probably delivers the nickel.

The protein localises to the cytoplasm. In terms of biological role, facilitates the functional incorporation of the urease nickel metallocenter. This process requires GTP hydrolysis, probably effectuated by UreG. This is Urease accessory protein UreG from Rhizobium meliloti (strain 1021) (Ensifer meliloti).